A 476-amino-acid chain; its full sequence is Bifunctional protein HldE (476 aa).

The ribokinase stretch occupies residues 1-318 (MKLDLTVLEQ…YTALHGDKLA (318 aa)). 195-198 (NLGE) is an ATP binding site. The active site involves Asp-264. The segment at 344–476 (MTNGCFDILH…MIDTILDREG (133 aa)) is cytidylyltransferase.

It in the N-terminal section; belongs to the carbohydrate kinase PfkB family. In the C-terminal section; belongs to the cytidylyltransferase family. In terms of assembly, homodimer.

The catalysed reaction is D-glycero-beta-D-manno-heptose 7-phosphate + ATP = D-glycero-beta-D-manno-heptose 1,7-bisphosphate + ADP + H(+). It carries out the reaction D-glycero-beta-D-manno-heptose 1-phosphate + ATP + H(+) = ADP-D-glycero-beta-D-manno-heptose + diphosphate. Its pathway is nucleotide-sugar biosynthesis; ADP-L-glycero-beta-D-manno-heptose biosynthesis; ADP-L-glycero-beta-D-manno-heptose from D-glycero-beta-D-manno-heptose 7-phosphate: step 1/4. It participates in nucleotide-sugar biosynthesis; ADP-L-glycero-beta-D-manno-heptose biosynthesis; ADP-L-glycero-beta-D-manno-heptose from D-glycero-beta-D-manno-heptose 7-phosphate: step 3/4. Its function is as follows. Catalyzes the phosphorylation of D-glycero-D-manno-heptose 7-phosphate at the C-1 position to selectively form D-glycero-beta-D-manno-heptose-1,7-bisphosphate. Catalyzes the ADP transfer from ATP to D-glycero-beta-D-manno-heptose 1-phosphate, yielding ADP-D-glycero-beta-D-manno-heptose. The sequence is that of Bifunctional protein HldE from Chromohalobacter salexigens (strain ATCC BAA-138 / DSM 3043 / CIP 106854 / NCIMB 13768 / 1H11).